The sequence spans 98 residues: TACTTTQQTAAYVALVSILSDDNFSQCSTDSGYSMLTATALPTTEQYTKMCASTACQAMIANIITLNPPDCELTVPTSGLVLNVYEYANGFNATCASL.

Intrachain disulfides connect cysteine 3-cysteine 71, cysteine 27-cysteine 56, and cysteine 51-cysteine 95. Asparagine 92 carries an N-linked (GlcNAc...) asparagine glycan.

The protein belongs to the elicitin family.

The protein resides in the secreted. In terms of biological role, induces local and distal defense responses (incompatible hypersensitive reaction) in plants from the solanaceae and cruciferae families. Elicits leaf necrosis and causes the accumulation of pathogenesis-related proteins. Might interact with the lipidic molecules of the plasma membrane. This is Elicitin Vex1 from Phytopythium vexans (Damping-off fungus).